The following is a 149-amino-acid chain: Nucleoside diphosphate kinase (149 aa).

ATP contacts are provided by lysine 9, phenylalanine 57, arginine 85, threonine 91, arginine 102, and asparagine 112. Histidine 115 functions as the Pros-phosphohistidine intermediate in the catalytic mechanism.

This sequence belongs to the NDK family. The cofactor is Mg(2+).

It localises to the cytoplasm. The enzyme catalyses a 2'-deoxyribonucleoside 5'-diphosphate + ATP = a 2'-deoxyribonucleoside 5'-triphosphate + ADP. The catalysed reaction is a ribonucleoside 5'-diphosphate + ATP = a ribonucleoside 5'-triphosphate + ADP. In terms of biological role, major role in the synthesis of nucleoside triphosphates other than ATP. The ATP gamma phosphate is transferred to the NDP beta phosphate via a ping-pong mechanism, using a phosphorylated active-site intermediate. This is Nucleoside diphosphate kinase from Methanoculleus marisnigri (strain ATCC 35101 / DSM 1498 / JR1).